The chain runs to 218 residues: MPMTLGYWDIRGLAHAIRLLLEYTDSSYEEKRYTMGDAPDFDRSQWLNEKFKLGLDFPNLPYLIDGSHKITQSNAILRYLGRKHNLCGETEEERIRVDILENQLMDNRMVLARLCYNPDFEKLKPGYLEQLPGMMRLYSEFLGKRPWFAGDKITFVDFIAYDVLERNQVFEATCLDAFPNLKDFIARFEGLKKISDYMKSSRFLPRPLFTKMAIWGSK.

Residues 2–88 (PMTLGYWDIR…YLGRKHNLCG (87 aa)) form the GST N-terminal domain. Glutathione-binding positions include 7 to 8 (YW), 46 to 50 (WLNEK), 59 to 60 (NL), and 72 to 73 (QS). The 119-residue stretch at 90-208 (TEEERIRVDI…KSSRFLPRPL (119 aa)) folds into the GST C-terminal domain. Tyrosine 116 contacts substrate.

Belongs to the GST superfamily. Mu family. As to quaternary structure, homodimer.

Its subcellular location is the cytoplasm. It catalyses the reaction RX + glutathione = an S-substituted glutathione + a halide anion + H(+). In terms of biological role, conjugation of reduced glutathione to a wide number of exogenous and endogenous hydrophobic electrophiles. In Rattus norvegicus (Rat), this protein is Glutathione S-transferase Mu 7.